The primary structure comprises 433 residues: Eukaryotic translation initiation factor 3 subunit E (433 aa).

The PCI domain maps to 217–390 (FFNHGKGRDL…GHVVMGTQPL (174 aa)).

This sequence belongs to the eIF-3 subunit E family. Component of the eukaryotic translation initiation factor 3 (eIF-3) complex.

It is found in the cytoplasm. In terms of biological role, component of the eukaryotic translation initiation factor 3 (eIF-3) complex, which is involved in protein synthesis of a specialized repertoire of mRNAs and, together with other initiation factors, stimulates binding of mRNA and methionyl-tRNAi to the 40S ribosome. The eIF-3 complex specifically targets and initiates translation of a subset of mRNAs involved in cell proliferation. The chain is Eukaryotic translation initiation factor 3 subunit E (eIF3-S6) from Anopheles gambiae (African malaria mosquito).